A 290-amino-acid polypeptide reads, in one-letter code: 4-hydroxy-tetrahydrodipicolinate synthase (290 aa).

Residue T44 participates in pyruvate binding. The active-site Proton donor/acceptor is Y132. The Schiff-base intermediate with substrate role is filled by K160. A pyruvate-binding site is contributed by I202.

This sequence belongs to the DapA family. Homotetramer; dimer of dimers.

It localises to the cytoplasm. It carries out the reaction L-aspartate 4-semialdehyde + pyruvate = (2S,4S)-4-hydroxy-2,3,4,5-tetrahydrodipicolinate + H2O + H(+). It participates in amino-acid biosynthesis; L-lysine biosynthesis via DAP pathway; (S)-tetrahydrodipicolinate from L-aspartate: step 3/4. Catalyzes the condensation of (S)-aspartate-beta-semialdehyde [(S)-ASA] and pyruvate to 4-hydroxy-tetrahydrodipicolinate (HTPA). The sequence is that of 4-hydroxy-tetrahydrodipicolinate synthase from Alkaliphilus oremlandii (strain OhILAs) (Clostridium oremlandii (strain OhILAs)).